A 319-amino-acid polypeptide reads, in one-letter code: Acetylglutamate kinase (319 aa).

Substrate-binding positions include 74-75 (GG), R96, and N210.

Belongs to the acetylglutamate kinase family. ArgB subfamily.

Its subcellular location is the cytoplasm. The enzyme catalyses N-acetyl-L-glutamate + ATP = N-acetyl-L-glutamyl 5-phosphate + ADP. The protein operates within amino-acid biosynthesis; L-arginine biosynthesis; N(2)-acetyl-L-ornithine from L-glutamate: step 2/4. Catalyzes the ATP-dependent phosphorylation of N-acetyl-L-glutamate. The polypeptide is Acetylglutamate kinase (Pseudarthrobacter chlorophenolicus (strain ATCC 700700 / DSM 12829 / CIP 107037 / JCM 12360 / KCTC 9906 / NCIMB 13794 / A6) (Arthrobacter chlorophenolicus)).